A 90-amino-acid chain; its full sequence is Mitochondrial import inner membrane translocase subunit Tim10 (90 aa).

Positions 29–54 match the Twin CX3C motif motif; sequence CHRKCVPPHYKEAELSKGESVCLDRC. Disulfide bonds link C29–C54 and C33–C50.

Belongs to the small Tim family. In terms of assembly, heterohexamer; composed of 3 copies of TIMM9 and 3 copies of TIMM10/TIM10A, named soluble 70 kDa complex. The complex forms a 6-bladed alpha-propeller structure and associates with the TIMM22 component of the TIM22 complex. Interacts with multi-pass transmembrane proteins in transit. Also forms a complex composed of TIMM9, TIMM10/TIM10A and FXC1/TIM10B.

The protein resides in the mitochondrion inner membrane. In terms of biological role, mitochondrial intermembrane chaperone that participates in the import and insertion of multi-pass transmembrane proteins into the mitochondrial inner membrane. May also be required for the transfer of beta-barrel precursors from the TOM complex to the sorting and assembly machinery (SAM complex) of the outer membrane. Acts as a chaperone-like protein that protects the hydrophobic precursors from aggregation and guide them through the mitochondrial intermembrane space. This is Mitochondrial import inner membrane translocase subunit Tim10 (TIMM10) from Bos taurus (Bovine).